The following is a 428-amino-acid chain: Putative zinc finger protein 355P (428 aa).

Residues 1-64 (MRDEVAEKEK…KHPGLTQHNI (64 aa)) form the KRAB domain. 3 consecutive C2H2-type zinc fingers follow at residues 72-94 (YKCKDCGKIFKWSSNLTIHQRIH), 100-122 (YKCEECGKAFKQSSKLNEHMRAH), and 128-150 (YKCEECGKAFKHPSGLTLHKRIH). The segment at 156 to 178 (YKFEECDKAFYWVLSFTKHMIIH) adopts a C2H2-type 4; degenerate zinc-finger fold. The C2H2-type 5; degenerate zinc-finger motif lies at 184-206 (YKYQECGKAFKWSSNLTIHKRIH). The C2H2-type 6; degenerate zinc finger occupies 212 to 234 (CKCEECGKACKQSLGLTIQKRIH). The C2H2-type 7; degenerate zinc-finger motif lies at 263–285 (YNCEKCGKAFYCSSNLIQNNIVH). 2 consecutive C2H2-type zinc fingers follow at residues 291–313 (YKCQECGKAFKKSLDLNVHKIIH) and 335–357 (YKCEECGKGFYCSSSLTKHMIVH). The C2H2-type 10; degenerate zinc-finger motif lies at 363–385 (YKCEECGKAFKWSSELTIHQRIR). A C2H2-type 11 zinc finger spans residues 391 to 413 (YKCEECVRVFKHSSKLNEHKRNH).

Belongs to the krueppel C2H2-type zinc-finger protein family.

It is found in the nucleus. In terms of biological role, may be involved in transcriptional regulation. The polypeptide is Putative zinc finger protein 355P (ZNF355P) (Homo sapiens (Human)).